Here is a 34-residue protein sequence, read N- to C-terminus: uncharacterized protein (34 aa).

Residues 10-30 form a helical membrane-spanning segment; that stretch reads LIITSSFFAIAAVLVLSVLLI.

It is found in the membrane. This is an uncharacterized protein from Escherichia coli O6:H1 (strain CFT073 / ATCC 700928 / UPEC).